The sequence spans 344 residues: 2,3,4,5-tetrahydropyridine-2,6-dicarboxylate N-succinyltransferase (344 aa).

Residue glutamate 205 coordinates Mg(2+). Glutamate 221 acts as the Acyl-anhydride intermediate in catalysis. Succinyl-CoA is bound by residues arginine 223, glycine 238, serine 241, alanine 264, 279-280 (EA), 287-289 (GTK), lysine 304, and 317-320 (RRNS).

It belongs to the type 2 tetrahydrodipicolinate N-succinyltransferase family. Homotrimer. Requires Magnesium ions are not essential for catalysis. as cofactor.

It is found in the cytoplasm. The catalysed reaction is (S)-2,3,4,5-tetrahydrodipicolinate + succinyl-CoA + H2O = (S)-2-succinylamino-6-oxoheptanedioate + CoA. It participates in amino-acid biosynthesis; L-lysine biosynthesis via DAP pathway; LL-2,6-diaminopimelate from (S)-tetrahydrodipicolinate (succinylase route): step 1/3. Its activity is regulated as follows. Weakly inhibited by D-2-aminopimelate. In terms of biological role, catalyzes the conversion of the cyclic tetrahydrodipicolinate (THDP) into the acyclic N-succinyl-L-2-amino-6-oxopimelate using succinyl-CoA. Displays succinyl transferase activity with L-2-aminopimelate and succinyl-CoA as substrates. This Pseudomonas aeruginosa (strain ATCC 15692 / DSM 22644 / CIP 104116 / JCM 14847 / LMG 12228 / 1C / PRS 101 / PAO1) protein is 2,3,4,5-tetrahydropyridine-2,6-dicarboxylate N-succinyltransferase.